Here is a 101-residue protein sequence, read N- to C-terminus: Apolipoprotein C-II (101 aa).

The N-terminal stretch at 1–22 is a signal peptide; it reads MGTRYFLVGFLILLVLGFEVQG. A lipid binding region spans residues 66–74; sequence AVDEKIRDI. The segment at 78 to 101 is lipoprotein lipase cofactor; it reads STAAVTTYAGIITDQVFSVLSGKD.

It belongs to the apolipoprotein C2 family. Proapolipoprotein C-II is synthesized as a sialic acid containing glycoprotein which is subsequently desialylated prior to its proteolytic processing. Post-translationally, proapolipoprotein C-II undergoes proteolytic cleavage of its N-terminal hexapeptide to generate apolipoprotein C-II. In bovine, proapolipoprotein C-II was found to be the minor form whereas apolipoprotein C-II was found to be the major form in plasma.

It localises to the secreted. Its function is as follows. Component of chylomicrons, very low-density lipoproteins (VLDL), low-density lipoproteins (LDL), and high-density lipoproteins (HDL) in plasma. Plays an important role in lipoprotein metabolism as an activator of lipoprotein lipase. Both proapolipoprotein C-II and apolipoprotein C-II can activate lipoprotein lipase. The chain is Apolipoprotein C-II (APOC2) from Bos taurus (Bovine).